The primary structure comprises 1527 residues: uncharacterized protein (1527 aa).

Coiled-coil stretches lie at residues 262–293, 699–751, 905–932, and 1217–1255; these read NVEI…NINE, QQQQ…SEKL, NNLN…ENQI, and KIIS…QKSS. The segment at 683-734 is disordered; the sequence is TNQEQEQDQQDQPPPPQQQQEQQQEQQQQQEQQQQQDQQQQDQQQDQQEKQQ. Over residues 700–728 the composition is skewed to low complexity; it reads QQQEQQQEQQQQQEQQQQQDQQQQDQQQD.

This is an uncharacterized protein from Dictyostelium discoideum (Social amoeba).